Here is a 489-residue protein sequence, read N- to C-terminus: MAAAAARVVLSSAARRRLWGFSESLLIRGAAGRSLYFGENRLRSTQAATQVVLNVPETRVTCLESGLRVASEDSGLSTCTVGLWIDAGSRYENEKNNGTAHFLEHMAFKGTKKRSQLDLELEIENMGAHLNAYTSREQTVYYAKAFSKDLPRAVEILADIIQNSTLGEAEIERERGVILREMQEVETNLQEVVFDYLHATAYQNTALGRTILGPTENIKSISRKDLVDYITTHYKGPRIVLAAAGGVSHDELLDLAKFHFGDSLCTHKGEIPALPPCKFTGSEIRVRDDKMPLAHLAIAVEAVGWAHPDTICLMVANTLIGNWDRSFGGGMNLSSKLAQLTCHGNLCHSFQSFNTSYTDTGLWGLYMVCESSTVADMLHVVQKEWMRLCTSVTESEVARARNLLKTNMLLQLDGSTPICEDIGRQMLCYNRRIPIPELEARIDAVNAETIREVCTKYIYNRSPAIAAVGPIKQLPDFKQIRSNMCWLRD.

The transit peptide at 1–43 (MAAAAARVVLSSAARRRLWGFSESLLIRGAAGRSLYFGENRLR) directs the protein to the mitochondrion. His-101 serves as a coordination point for Zn(2+). Glu-104 functions as the Proton acceptor in the catalytic mechanism. Zn(2+)-binding residues include His-105 and Glu-181.

It belongs to the peptidase M16 family. As to quaternary structure, heterodimer of PMPCA (alpha) and PMPCB (beta) subunits, forming the mitochondrial processing protease (MPP) in which PMPCA is involved in substrate recognition and binding and PMPCB is the catalytic subunit. Zn(2+) is required as a cofactor.

The protein localises to the mitochondrion matrix. The enzyme catalyses Release of N-terminal transit peptides from precursor proteins imported into the mitochondrion, typically with Arg in position P2.. Binding to PMPCA is required for catalytic activity. Functionally, catalytic subunit of the essential mitochondrial processing protease (MPP), which cleaves the mitochondrial sequence off newly imported precursors proteins. Preferentially, cleaves after an arginine at position P2. Required for PINK1 turnover by coupling PINK1 mitochondrial import and cleavage, which results in subsequent PINK1 proteolysis. This chain is Mitochondrial-processing peptidase subunit beta (PMPCB), found in Homo sapiens (Human).